Reading from the N-terminus, the 609-residue chain is UvrABC system protein C (609 aa).

The 78-residue stretch at 15–92 (TGSGVYQMQD…IKQFRPRYNV (78 aa)) folds into the GIY-YIG domain. Positions 202–237 (DQVIIKLTERMEVASENLVFEEAAHYRDQIRQLRRL) constitute a UVR domain.

The protein belongs to the UvrC family. In terms of assembly, interacts with UvrB in an incision complex.

The protein localises to the cytoplasm. In terms of biological role, the UvrABC repair system catalyzes the recognition and processing of DNA lesions. UvrC both incises the 5' and 3' sides of the lesion. The N-terminal half is responsible for the 3' incision and the C-terminal half is responsible for the 5' incision. This is UvrABC system protein C from Coxiella burnetii (strain CbuK_Q154) (Coxiella burnetii (strain Q154)).